A 366-amino-acid polypeptide reads, in one-letter code: G-protein coupled receptor 183-B (366 aa).

Residues 1 to 24 (MMSPDLDLNFSSNCNLYDHRPVAR) are Extracellular-facing. Asn9 is a glycosylation site (N-linked (GlcNAc...) asparagine). A helical membrane pass occupies residues 25 to 50 (VLIPLVYSIICPVGLLGNALALHVVI). Topologically, residues 51–70 (SSTTKINSITLYSANLAVSD) are cytoplasmic. Residues 71–88 (ILFCLSLPLRAVYYGLGF) traverse the membrane as a helical segment. Over 89–98 (HWPMGEVLCK) the chain is Extracellular. Cys97 and Cys175 form a disulfide bridge. Residues 99–120 (AIALLFYLNCYAGVNFMTCLAV) traverse the membrane as a helical segment. At 121-142 (DRFVALVFPARLAKLRKAKNVR) the chain is on the cytoplasmic side. Residues 143–161 (FVCLAIWLLVLAQTLPLLT) form a helical membrane-spanning segment. Topologically, residues 162-187 (IGLTKTEPDSSITCMEYPNFEGVFKG) are extracellular. The helical transmembrane segment at 188-210 (LPYMLIVAVVLGFGIPVMTIIAC) threads the bilayer. Residues 211–236 (YSILTHKLHQAAKSNQLTERSGKTKK) are Cytoplasmic-facing. A helical transmembrane segment spans residues 237 to 260 (ARGVIAGVVFVFVVCFSPYHIDIL). Residues 261–280 (QYMIRKLLYETDCKELQSFQ) lie on the Extracellular side of the membrane. Residues 281–305 (ISLHITVCLMNLNSCLDPFVYFFAC) traverse the membrane as a helical segment. The Cytoplasmic segment spans residues 306–366 (KGYKQKVMRM…QQICYQPSAT (61 aa)).

The protein belongs to the G-protein coupled receptor 1 family.

It is found in the cell membrane. Functionally, probable receptor for oxysterols that plays a central role during humoral immunity. Promotes activated B-cell localization in the outer follicle and interfollicular regions. The chain is G-protein coupled receptor 183-B (gpr183b) from Danio rerio (Zebrafish).